A 602-amino-acid chain; its full sequence is Glutaminase liver isoform, mitochondrial (602 aa).

A mitochondrion-targeting transit peptide spans Met-1–Ala-14. Disordered regions lie at residues Met-1–Gly-29 and Ala-45–Ser-66. Ser-219 is a substrate binding site. Lys-253 is subject to N6-succinyllysine. Asn-268 provides a ligand contact to substrate. Lys-279 and Lys-284 each carry N6-acetyllysine. Positions 314 and 321 each coordinate substrate. Lys-329 is modified (N6-acetyllysine). Positions 347, 399, and 417 each coordinate substrate. 2 ANK repeats span residues Asp-518–Arg-551 and Trp-552–Gln-585.

The protein belongs to the glutaminase family. Homotetramer, dimer of dimers. Does not assemble into higher oligomers. Interacts with the PDZ domain of the syntrophin SNTA1. Interacts with the PDZ domain of TAX1BP3.

It is found in the mitochondrion. It carries out the reaction L-glutamine + H2O = L-glutamate + NH4(+). Its activity is regulated as follows. Enzyme activity is not stimulated by phosphate. Phosphate increases kcat, but decreases substrate affinity, resulting in unchanged enzyme activity. In terms of biological role, plays an important role in the regulation of glutamine catabolism. Promotes mitochondrial respiration and increases ATP generation in cells by catalyzing the synthesis of glutamate and alpha-ketoglutarate. Increases cellular anti-oxidant function via NADH and glutathione production. May play a role in preventing tumor proliferation. The polypeptide is Glutaminase liver isoform, mitochondrial (Gls2) (Mus musculus (Mouse)).